A 76-amino-acid polypeptide reads, in one-letter code: Large ribosomal subunit protein uL30 (76 aa).

Belongs to the universal ribosomal protein uL30 family. In terms of assembly, part of the 50S ribosomal subunit.

This is Large ribosomal subunit protein uL30 from Anaeromyxobacter dehalogenans (strain 2CP-1 / ATCC BAA-258).